We begin with the raw amino-acid sequence, 63 residues long: Sperm protamine P1 (63 aa).

The tract at residues 1-63 (MARYRRHSRS…RYSRRGRRRY (63 aa)) is disordered.

The protein belongs to the protamine P1 family. Testis.

It is found in the nucleus. The protein resides in the chromosome. In terms of biological role, protamines substitute for histones in the chromatin of sperm during the haploid phase of spermatogenesis. They compact sperm DNA into a highly condensed, stable and inactive complex. This Phascogale tapoatafa (Common wambenger) protein is Sperm protamine P1 (PRM1).